The chain runs to 322 residues: N-acetyl-gamma-glutamyl-phosphate reductase (322 aa).

C132 is an active-site residue.

This sequence belongs to the NAGSA dehydrogenase family. Type 1 subfamily.

The protein localises to the cytoplasm. The catalysed reaction is N-acetyl-L-glutamate 5-semialdehyde + phosphate + NADP(+) = N-acetyl-L-glutamyl 5-phosphate + NADPH + H(+). It functions in the pathway amino-acid biosynthesis; L-arginine biosynthesis; N(2)-acetyl-L-ornithine from L-glutamate: step 3/4. Catalyzes the NADPH-dependent reduction of N-acetyl-5-glutamyl phosphate to yield N-acetyl-L-glutamate 5-semialdehyde. This is N-acetyl-gamma-glutamyl-phosphate reductase from Bacteroides thetaiotaomicron (strain ATCC 29148 / DSM 2079 / JCM 5827 / CCUG 10774 / NCTC 10582 / VPI-5482 / E50).